Reading from the N-terminus, the 411-residue chain is MLERMLPFLGRKRDKAAADLPVRVGHSAPRNSRMLEYDQNLVWVTLLLLAYGLVMVYSATISFHDSPRYAQWSPYHYFIRDLFSIAAALLASWIVVQIPMAELQKWSMRFFFLSLIGLVLVLLPHIGKDVNGSKRWVVFPGGLNFQPSELVKLTALIYAADFMVRKQEVKQSLLKTFLPMMAVMMIVGVLLLAEPDMGAFLVIASITLAILFLGGANGKLFSVFSVAVIGAFVLMIVLSPWRRDRIFAYLNPWSESNALGSAYQLSHALIAMGRGEWFGVGLGGSIEKLHYLPEAHTDFLLAIIGEELGLVGVGVVIFAFYWIVRRAFDIGRQALVLDRMYSALVAQGIGVWIGGQAFINIGVNLGLLPTKGLTLPLMSYGGSALLLNCMAIAVLLRVDFENRILMRGGHV.

Residues 1–40 lie on the Cytoplasmic side of the membrane; that stretch reads MLERMLPFLGRKRDKAAADLPVRVGHSAPRNSRMLEYDQN. A helical transmembrane segment spans residues 41–61; it reads LVWVTLLLLAYGLVMVYSATI. Residues 62-81 lie on the Periplasmic side of the membrane; the sequence is SFHDSPRYAQWSPYHYFIRD. Residues 82-102 traverse the membrane as a helical segment; that stretch reads LFSIAAALLASWIVVQIPMAE. Topologically, residues 103 to 109 are cytoplasmic; sequence LQKWSMR. Residues 110–130 form a helical membrane-spanning segment; the sequence is FFFLSLIGLVLVLLPHIGKDV. Residues 131 to 136 are Periplasmic-facing; that stretch reads NGSKRW. The helical transmembrane segment at 137 to 157 threads the bilayer; the sequence is VVFPGGLNFQPSELVKLTALI. At 158-172 the chain is on the cytoplasmic side; the sequence is YAADFMVRKQEVKQS. Residues 173 to 193 traverse the membrane as a helical segment; the sequence is LLKTFLPMMAVMMIVGVLLLA. The Periplasmic portion of the chain corresponds to 194 to 196; the sequence is EPD. A helical membrane pass occupies residues 197-217; that stretch reads MGAFLVIASITLAILFLGGAN. Topologically, residues 218–219 are cytoplasmic; sequence GK. Residues 220 to 240 form a helical membrane-spanning segment; the sequence is LFSVFSVAVIGAFVLMIVLSP. Topologically, residues 241–298 are periplasmic; the sequence is WRRDRIFAYLNPWSESNALGSAYQLSHALIAMGRGEWFGVGLGGSIEKLHYLPEAHTD. The chain crosses the membrane as a helical span at residues 299-319; sequence FLLAIIGEELGLVGVGVVIFA. At 320–347 the chain is on the cytoplasmic side; that stretch reads FYWIVRRAFDIGRQALVLDRMYSALVAQ. The chain crosses the membrane as a helical span at residues 348-368; the sequence is GIGVWIGGQAFINIGVNLGLL. The Periplasmic segment spans residues 369–374; it reads PTKGLT. The helical transmembrane segment at 375-395 threads the bilayer; the sequence is LPLMSYGGSALLLNCMAIAVL. At 396-411 the chain is on the cytoplasmic side; it reads LRVDFENRILMRGGHV.

The protein belongs to the SEDS family. FtsW subfamily.

Its subcellular location is the cell inner membrane. The catalysed reaction is [GlcNAc-(1-&gt;4)-Mur2Ac(oyl-L-Ala-gamma-D-Glu-L-Lys-D-Ala-D-Ala)](n)-di-trans,octa-cis-undecaprenyl diphosphate + beta-D-GlcNAc-(1-&gt;4)-Mur2Ac(oyl-L-Ala-gamma-D-Glu-L-Lys-D-Ala-D-Ala)-di-trans,octa-cis-undecaprenyl diphosphate = [GlcNAc-(1-&gt;4)-Mur2Ac(oyl-L-Ala-gamma-D-Glu-L-Lys-D-Ala-D-Ala)](n+1)-di-trans,octa-cis-undecaprenyl diphosphate + di-trans,octa-cis-undecaprenyl diphosphate + H(+). Its pathway is cell wall biogenesis; peptidoglycan biosynthesis. In terms of biological role, peptidoglycan polymerase that is essential for cell division. The chain is Probable peptidoglycan glycosyltransferase FtsW from Thiomonas intermedia (strain K12) (Thiobacillus intermedius).